A 98-amino-acid polypeptide reads, in one-letter code: NADH-ubiquinone oxidoreductase chain 4L (98 aa).

Transmembrane regions (helical) follow at residues 1 to 21, 28 to 48, and 59 to 79; these read MTPL…GVLI, STLL…SLLI, and APLI…ALLV.

Belongs to the complex I subunit 4L family. In terms of assembly, core subunit of respiratory chain NADH dehydrogenase (Complex I) which is composed of 45 different subunits.

The protein localises to the mitochondrion inner membrane. The enzyme catalyses a ubiquinone + NADH + 5 H(+)(in) = a ubiquinol + NAD(+) + 4 H(+)(out). Functionally, core subunit of the mitochondrial membrane respiratory chain NADH dehydrogenase (Complex I) which catalyzes electron transfer from NADH through the respiratory chain, using ubiquinone as an electron acceptor. Part of the enzyme membrane arm which is embedded in the lipid bilayer and involved in proton translocation. This is NADH-ubiquinone oxidoreductase chain 4L (MT-ND4L) from Tarsipes rostratus (Honey possum).